Reading from the N-terminus, the 259-residue chain is NAD kinase (259 aa).

Residue Asp-49 is the Proton acceptor of the active site. NAD(+) is bound by residues 49-50, Arg-54, 118-119, Asp-148, Ala-156, 159-164, and Ala-183; these read DG, NE, and TAYNYS.

This sequence belongs to the NAD kinase family. A divalent metal cation is required as a cofactor.

It localises to the cytoplasm. The catalysed reaction is NAD(+) + ATP = ADP + NADP(+) + H(+). Involved in the regulation of the intracellular balance of NAD and NADP, and is a key enzyme in the biosynthesis of NADP. Catalyzes specifically the phosphorylation on 2'-hydroxyl of the adenosine moiety of NAD to yield NADP. This Xylella fastidiosa (strain 9a5c) protein is NAD kinase.